The following is a 194-amino-acid chain: FAD-linked sulfhydryl oxidase ERV1 (194 aa).

The interval 44-72 (LSLSLSPPPTPPSPPPPPPEVLKKDSKAA) is disordered. A compositionally biased stretch (pro residues) spans 49 to 63 (SPPPTPPSPPPPPPE). In terms of domain architecture, ERV/ALR sulfhydryl oxidase spans 72–172 (APLTKEEVGR…FPCQRVNARW (101 aa)). 11 residues coordinate FAD: K76, R81, W84, E121, H125, C148, H151, N152, N155, K160, and R171. C119 and C122 are disulfide-bonded. The cysteines at positions 148 and 165 are disulfide-linked. C177 and C182 are oxidised to a cystine. The Required for dimerization and substrate specificity signature appears at 177–182 (CPERSC).

In terms of assembly, homodimer. Requires FAD as cofactor. Post-translationally, contains three disulfide bonds; one catalytic disulfide (Cys-119 to Cys-122), one structural disulfide (Cys-148 to Cys-165), and one shuttle disulfide (Cys-177 to Cys-182).

The protein localises to the mitochondrion. The enzyme catalyses 2 R'C(R)SH + O2 = R'C(R)S-S(R)CR' + H2O2. Its function is as follows. FAD-dependent sulfhydryl oxidase that catalyzes disulfide bond formation. Oxidizes thioredoxin in vitro. Required for the import and folding of small cysteine-containing proteins in the mitochondrial intermembrane space, and can act independently of the oxidoreductase MIA40. Can oxidize the cytochrome c oxidase assembly protein COX19, a typical substrate of MIA40. This Oryza sativa subsp. japonica (Rice) protein is FAD-linked sulfhydryl oxidase ERV1.